The sequence spans 593 residues: MTADSVLSIPPYKADDQDVVAELNSRFGAETFTVQSTCTDMPVLWVAREKLIEVLRFLRNLPRPYVMLYDLHGVDERLRTQRRGLPEADFSVFYHLLSIERNSDVMIKVALKEGDLKLPSATGIWPNANWYEREIWDMYGIHIEGHPHLTRILMPPTWEGHPLRKDYPARATEFDPYSLSAAKQDLEQEALRFKPEEWGMKRGGEHEDFMFLNLGPNHPSAHGAFRIILQLDGEEIVDCVPEIGYHHRGAEKMAERQSWHSFIPYTDRIDYLGGVMNNLPYVLAVEKLAGIKVPQRVDVIRVMMAEFFRILNHLLYLGTYIQDVGAMTPVFFTFTDRQRAYKVVEAITGFRLHPAWYRIGGVAHDLPRGWDALVKEFVEWMPKRLDEYEKAALQNSILRGRTMDVARYDTRQALEWGVTGAGLRATGLDFDLRKARPYSGYENFEFEVPLAHNGDAYDRCMVKLGEMRQSLRIIEQCRRNMPEGPYKADHPLTTPPPKERTLQHIETLITHFLQVSWGPVMPANESFQMIEATKGINSYYLTSDGSTMSYRTRIRTPSYAHLQQIPSVIRGSMVADLIAYLGSIDFVMADVDR.

Positions 1–184 (MTADSVLSIP…DPYSLSAAKQ (184 aa)) are NADH dehydrogenase I subunit C. The interval 208–593 (DFMFLNLGPN…IDFVMADVDR (386 aa)) is NADH dehydrogenase I subunit D.

It in the N-terminal section; belongs to the complex I 30 kDa subunit family. The protein in the C-terminal section; belongs to the complex I 49 kDa subunit family. NDH-1 is composed of 13 different subunits. Subunits NuoB, CD, E, F, and G constitute the peripheral sector of the complex.

Its subcellular location is the cell inner membrane. The enzyme catalyses a quinone + NADH + 5 H(+)(in) = a quinol + NAD(+) + 4 H(+)(out). Functionally, NDH-1 shuttles electrons from NADH, via FMN and iron-sulfur (Fe-S) centers, to quinones in the respiratory chain. The immediate electron acceptor for the enzyme in this species is believed to be ubiquinone. Couples the redox reaction to proton translocation (for every two electrons transferred, four hydrogen ions are translocated across the cytoplasmic membrane), and thus conserves the redox energy in a proton gradient. The protein is NADH-quinone oxidoreductase subunit C/D of Azotobacter vinelandii (strain DJ / ATCC BAA-1303).